The primary structure comprises 553 residues: Dihydroxy-acid dehydratase (553 aa).

D78 serves as a coordination point for Mg(2+). C119 contacts [2Fe-2S] cluster. Residues D120 and K121 each coordinate Mg(2+). N6-carboxylysine is present on K121. A [2Fe-2S] cluster-binding site is contributed by C193. A Mg(2+)-binding site is contributed by E441. The Proton acceptor role is filled by S467.

It belongs to the IlvD/Edd family. In terms of assembly, homodimer. Requires [2Fe-2S] cluster as cofactor. Mg(2+) serves as cofactor.

It catalyses the reaction (2R)-2,3-dihydroxy-3-methylbutanoate = 3-methyl-2-oxobutanoate + H2O. The enzyme catalyses (2R,3R)-2,3-dihydroxy-3-methylpentanoate = (S)-3-methyl-2-oxopentanoate + H2O. The protein operates within amino-acid biosynthesis; L-isoleucine biosynthesis; L-isoleucine from 2-oxobutanoate: step 3/4. Its pathway is amino-acid biosynthesis; L-valine biosynthesis; L-valine from pyruvate: step 3/4. In terms of biological role, functions in the biosynthesis of branched-chain amino acids. Catalyzes the dehydration of (2R,3R)-2,3-dihydroxy-3-methylpentanoate (2,3-dihydroxy-3-methylvalerate) into 2-oxo-3-methylpentanoate (2-oxo-3-methylvalerate) and of (2R)-2,3-dihydroxy-3-methylbutanoate (2,3-dihydroxyisovalerate) into 2-oxo-3-methylbutanoate (2-oxoisovalerate), the penultimate precursor to L-isoleucine and L-valine, respectively. The protein is Dihydroxy-acid dehydratase of Geotalea daltonii (strain DSM 22248 / JCM 15807 / FRC-32) (Geobacter daltonii).